An 89-amino-acid polypeptide reads, in one-letter code: MSRKCPLTGKRPRRGNSYTIRGIAKKKKGIGLKVTGKTPRCFFPNMVTKRLWSTEENKFLKLKISASALRLINKLGLEKVIARAKNKSL.

The protein belongs to the bacterial ribosomal protein bL28 family.

This is Large ribosomal subunit protein bL28 from Chlamydia abortus (strain DSM 27085 / S26/3) (Chlamydophila abortus).